Reading from the N-terminus, the 287-residue chain is Homoserine kinase (287 aa).

78-88 (PLAHGLGSSSS) contacts ATP.

The protein belongs to the GHMP kinase family. Homoserine kinase subfamily.

It is found in the cytoplasm. It catalyses the reaction L-homoserine + ATP = O-phospho-L-homoserine + ADP + H(+). Its pathway is amino-acid biosynthesis; L-threonine biosynthesis; L-threonine from L-aspartate: step 4/5. Its function is as follows. Catalyzes the ATP-dependent phosphorylation of L-homoserine to L-homoserine phosphate. The protein is Homoserine kinase of Lactobacillus acidophilus (strain ATCC 700396 / NCK56 / N2 / NCFM).